A 289-amino-acid chain; its full sequence is 4-hydroxy-3-methylbut-2-enyl diphosphate reductase (289 aa).

Cys13 is a [4Fe-4S] cluster binding site. Residues His42 and His76 each contribute to the (2E)-4-hydroxy-3-methylbut-2-enyl diphosphate site. Residues His42 and His76 each coordinate dimethylallyl diphosphate. 2 residues coordinate isopentenyl diphosphate: His42 and His76. Residue Cys98 participates in [4Fe-4S] cluster binding. Position 130 (His130) interacts with (2E)-4-hydroxy-3-methylbut-2-enyl diphosphate. His130 is a binding site for dimethylallyl diphosphate. His130 is an isopentenyl diphosphate binding site. Glu132 acts as the Proton donor in catalysis. Residue Thr168 participates in (2E)-4-hydroxy-3-methylbut-2-enyl diphosphate binding. Cys199 is a [4Fe-4S] cluster binding site. (2E)-4-hydroxy-3-methylbut-2-enyl diphosphate contacts are provided by Ser227, Ser228, Asn229, and Ser272. Residues Ser227, Ser228, Asn229, and Ser272 each contribute to the dimethylallyl diphosphate site. Isopentenyl diphosphate is bound by residues Ser227, Ser228, Asn229, and Ser272.

The protein belongs to the IspH family. [4Fe-4S] cluster is required as a cofactor.

The enzyme catalyses isopentenyl diphosphate + 2 oxidized [2Fe-2S]-[ferredoxin] + H2O = (2E)-4-hydroxy-3-methylbut-2-enyl diphosphate + 2 reduced [2Fe-2S]-[ferredoxin] + 2 H(+). It catalyses the reaction dimethylallyl diphosphate + 2 oxidized [2Fe-2S]-[ferredoxin] + H2O = (2E)-4-hydroxy-3-methylbut-2-enyl diphosphate + 2 reduced [2Fe-2S]-[ferredoxin] + 2 H(+). It participates in isoprenoid biosynthesis; dimethylallyl diphosphate biosynthesis; dimethylallyl diphosphate from (2E)-4-hydroxy-3-methylbutenyl diphosphate: step 1/1. The protein operates within isoprenoid biosynthesis; isopentenyl diphosphate biosynthesis via DXP pathway; isopentenyl diphosphate from 1-deoxy-D-xylulose 5-phosphate: step 6/6. Its function is as follows. Catalyzes the conversion of 1-hydroxy-2-methyl-2-(E)-butenyl 4-diphosphate (HMBPP) into a mixture of isopentenyl diphosphate (IPP) and dimethylallyl diphosphate (DMAPP). Acts in the terminal step of the DOXP/MEP pathway for isoprenoid precursor biosynthesis. This chain is 4-hydroxy-3-methylbut-2-enyl diphosphate reductase, found in Porphyromonas gingivalis (strain ATCC BAA-308 / W83).